The sequence spans 209 residues: uncharacterized protein (209 aa).

Positions 1-19 are cleaved as a signal peptide; that stretch reads MGYFPYLAVFVCLLASGDA. N-linked (GlcNAc...) asparagine glycosylation is found at N41 and N109.

As to expression, component of the acid-soluble organic matrix of prismatic shell layers (at protein level).

Its subcellular location is the secreted. This is an uncharacterized protein from Haliotis asinina (Donkey's ear abalone).